The primary structure comprises 194 residues: Large ribosomal subunit protein bL25 (194 aa).

This sequence belongs to the bacterial ribosomal protein bL25 family. CTC subfamily. In terms of assembly, part of the 50S ribosomal subunit; part of the 5S rRNA/L5/L18/L25 subcomplex. Contacts the 5S rRNA. Binds to the 5S rRNA independently of L5 and L18.

Its function is as follows. This is one of the proteins that binds to the 5S RNA in the ribosome where it forms part of the central protuberance. This chain is Large ribosomal subunit protein bL25, found in Parabacteroides distasonis (strain ATCC 8503 / DSM 20701 / CIP 104284 / JCM 5825 / NCTC 11152).